Consider the following 303-residue polypeptide: Putative S-adenosyl-L-methionine-dependent methyltransferase MAV_4435 (303 aa).

S-adenosyl-L-methionine is bound by residues Asp-129 and 158–159 (DL).

It belongs to the UPF0677 family.

Functionally, exhibits S-adenosyl-L-methionine-dependent methyltransferase activity. The sequence is that of Putative S-adenosyl-L-methionine-dependent methyltransferase MAV_4435 from Mycobacterium avium (strain 104).